A 356-amino-acid polypeptide reads, in one-letter code: MTTSFARNVPLADYTTLGLGGPAARFCSVASTDELIATVRDVDRSGDPLLVLGGGSNLVVADEGFAGTVIQVDSSDLSYTEVDDTVVRVRVDAGMEWDSFVARCVDEGLSGVEALSGIPGRVGATPIQNVGAYGQDISQTVVEVTVYDRAADRTRVLSAAECGFAYRTSIFKGRDRYVVCDVVFELTRSKLSRPIRYAELARSLGVSQGDQVPLADVRDAVLSLRRSKGMVLDPADPDTRSAGSFFTNPILSADEFARFTQRVAEVLGPEVTPPAYPDGDGRVKTSAAWLIERAGFPKGYGTGPVGISTKHTLALTNRGGATTADLLALAREVRAGVARVFGITLVNEPVMIGVTL.

Residues 19 to 227 (LGGPAARFCS…RDAVLSLRRS (209 aa)) form the FAD-binding PCMH-type domain. R167 is an active-site residue. The Proton donor role is filled by S244. E348 is a catalytic residue.

It belongs to the MurB family. FAD serves as cofactor.

It localises to the cytoplasm. It carries out the reaction UDP-N-acetyl-alpha-D-muramate + NADP(+) = UDP-N-acetyl-3-O-(1-carboxyvinyl)-alpha-D-glucosamine + NADPH + H(+). The protein operates within cell wall biogenesis; peptidoglycan biosynthesis. In terms of biological role, cell wall formation. The polypeptide is UDP-N-acetylenolpyruvoylglucosamine reductase (Thermobifida fusca (strain YX)).